The following is a 298-amino-acid chain: MSRISILAVAAALVASATAASVTTTLSPYDERVNLIELAVYVSDIGAHLSEYYAFQALHKTETYPPEIAKAVFAGGDFTTMLTGISGDEVTRMITGVPWYSTRLMGAISEALANEGIATAVPASTTEASSTSTSEASSAATESSSSSESSAETSSNAASTQATVSSESSSAASTIASSAESSVASSVASSVASSASFANTTAPVSSTSSISVTPVVQNGTDSTVTKTQASTVETTITSCSNNVCSTVTKPVSSKAQSTATSVTSSASRVIDVTTNGANKFNNGVFGAAAIAGAAALLL.

The N-terminal stretch at Met-1 to Ala-19 is a signal peptide. The tract at residues Pro-122–Ser-168 is disordered. The GPI-anchor amidated asparagine moiety is linked to residue Asn-275. Positions Gly-276–Leu-298 are cleaved as a propeptide — removed in mature form.

This sequence belongs to the SRP1/TIP1 family. Post-translationally, extensively O-glycosylated. The GPI-anchor is attached to the protein in the endoplasmic reticulum and serves to target the protein to the cell surface. There, the glucosamine-inositol phospholipid moiety is cleaved off and the GPI-modified mannoprotein is covalently attached via its lipidless GPI glycan remnant to the 1,6-beta-glucan of the outer cell wall layer.

It is found in the secreted. Its subcellular location is the cell wall. The protein resides in the membrane. Component of the cell wall. The protein is Cell wall protein DAN1 (DAN1) of Saccharomyces cerevisiae (strain ATCC 204508 / S288c) (Baker's yeast).